We begin with the raw amino-acid sequence, 422 residues long: Sphingomyelin phosphodiesterase 2 (422 aa).

Position 49 (Glu49) interacts with Mg(2+). His272 acts as the Proton acceptor in catalysis. 2 helical membrane passes run 325-345 (ALFG…CVLA) and 354-374 (AIML…VYLF). A disordered region spans residues 397–422 (TETQDLGSEPHPTHCRQQEADRAEEK). Residues 412 to 422 (RQQEADRAEEK) are compositionally biased toward basic and acidic residues.

It belongs to the neutral sphingomyelinase family. The cofactor is Mg(2+).

It localises to the membrane. It catalyses the reaction a sphingomyelin + H2O = phosphocholine + an N-acylsphing-4-enine + H(+). The catalysed reaction is 1-O-octadecyl-sn-glycero-3-phosphocholine + H2O = 1-O-octadecyl-sn-glycerol + phosphocholine + H(+). The enzyme catalyses an N-(acyl)-sphingosylphosphocholine + H2O = an N-acyl-sphingoid base + phosphocholine + H(+). It carries out the reaction 1-hexadecanoyl-sn-glycero-3-phosphocholine + H2O = 1-hexadecanoyl-sn-glycerol + phosphocholine + H(+). It catalyses the reaction a sphingosylphosphocholine + H2O = a sphingoid base + phosphocholine + H(+). The catalysed reaction is 1-O-hexadecyl-sn-glycero-3-phosphocholine + H2O = 1-O-hexadecyl-sn-glycerol + phosphocholine + H(+). It participates in lipid metabolism; sphingolipid metabolism. In terms of biological role, catalyzes the hydrolysis of sphingomyelin to form ceramide and phosphocholine. Ceramide mediates numerous cellular functions, such as apoptosis and growth arrest, and is capable of regulating these 2 cellular events independently. Also hydrolyzes sphingosylphosphocholine. Hydrolyze 1-acyl-2-lyso-sn-glycero-3-phosphocholine (lyso-PC) and 1-O-alkyl-2-lyso-sn-glycero-3-phosphocholine (lyso-platelet-activating factor). The polypeptide is Sphingomyelin phosphodiesterase 2 (Smpd2) (Rattus norvegicus (Rat)).